The sequence spans 344 residues: uncharacterized protein (344 aa).

Belongs to the glycosyltransferase 2 family.

Its function is as follows. May be involved in the production of the exopolysaccharide (EPS) component of the extracellular matrix during biofilm formation. EPS is responsible for the adhesion of chains of cells into bundles. This is an uncharacterized protein from Bacillus subtilis (strain 168).